The primary structure comprises 267 residues: MGQKINPFGYRLGITENHRSKWFSDSNKAGERYRDFVLEDDQIRKEMSKDLERAGVSRIVIERTRDRVRVDIHTARPGIVIGRRGAEAERVRAKLEKLTGKQVQLNIFEVKNAALDAQLVAQGIAEQLTNRVTFRRAMRKAQQDAMRAGAKGIRIKLSGRLGGAEISRSEFYREGRVPLQTLRALIDYGFFEAKTTYGRIGVKVWIYKGDMTESEFEEQQAQQNNRPGRRGGDRRPRRGNRSAAPQAAEAPKAEAPAEAAPAAETKE.

The KH type-2 domain maps to 43 to 111; the sequence is IRKEMSKDLE…QVQLNIFEVK (69 aa). A disordered region spans residues 216–267; the sequence is FEEQQAQQNNRPGRRGGDRRPRRGNRSAAPQAAEAPKAEAPAEAAPAAETKE. Residues 241–267 show a composition bias toward low complexity; that stretch reads RSAAPQAAEAPKAEAPAEAAPAAETKE.

This sequence belongs to the universal ribosomal protein uS3 family. In terms of assembly, part of the 30S ribosomal subunit. Forms a tight complex with proteins S10 and S14.

Functionally, binds the lower part of the 30S subunit head. Binds mRNA in the 70S ribosome, positioning it for translation. This Bifidobacterium longum subsp. infantis (strain ATCC 15697 / DSM 20088 / JCM 1222 / NCTC 11817 / S12) protein is Small ribosomal subunit protein uS3.